A 366-amino-acid polypeptide reads, in one-letter code: Alanine racemase (366 aa).

The active-site Proton acceptor; specific for D-alanine is Lys33. Lys33 is subject to N6-(pyridoxal phosphate)lysine. Arg129 serves as a coordination point for substrate. Catalysis depends on Tyr253, which acts as the Proton acceptor; specific for L-alanine. A substrate-binding site is contributed by Met301.

This sequence belongs to the alanine racemase family. Pyridoxal 5'-phosphate is required as a cofactor.

The enzyme catalyses L-alanine = D-alanine. The protein operates within amino-acid biosynthesis; D-alanine biosynthesis; D-alanine from L-alanine: step 1/1. Functionally, catalyzes the interconversion of L-alanine and D-alanine. May also act on other amino acids. The polypeptide is Alanine racemase (alr) (Xanthomonas oryzae pv. oryzae (strain MAFF 311018)).